The primary structure comprises 334 residues: Porphobilinogen deaminase (334 aa).

At C250 the chain carries S-(dipyrrolylmethanemethyl)cysteine.

It belongs to the HMBS family. In terms of assembly, monomer. It depends on dipyrromethane as a cofactor.

It catalyses the reaction 4 porphobilinogen + H2O = hydroxymethylbilane + 4 NH4(+). It functions in the pathway porphyrin-containing compound metabolism; protoporphyrin-IX biosynthesis; coproporphyrinogen-III from 5-aminolevulinate: step 2/4. Its function is as follows. Tetrapolymerization of the monopyrrole PBG into the hydroxymethylbilane pre-uroporphyrinogen in several discrete steps. The polypeptide is Porphobilinogen deaminase (Cutibacterium acnes (strain DSM 16379 / KPA171202) (Propionibacterium acnes)).